We begin with the raw amino-acid sequence, 555 residues long: MFS-type transporter VdtG (555 aa).

A disordered region spans residues 1-20; sequence MNGNGTADKPGPPGGKPFGP. N-linked (GlcNAc...) asparagine glycosylation occurs at Asn4. 3 helical membrane-spanning segments follow: residues 30-50, 71-91, and 101-121; these read TGFK…LTAL, DIGW…LLFG, and WVFL…GAAP. N-linked (GlcNAc...) asparagine glycosylation is present at Asn122. 2 helical membrane-spanning segments follow: residues 132 to 152 and 162 to 182; these read IAGL…FFTV and GIAG…GGGF. Residue Asn185 is glycosylated (N-linked (GlcNAc...) asparagine). 4 helical membrane passes run 190–210, 232–252, 262–282, and 304–324; these read WCFY…LLFL, LGNL…QWGG, IVAL…VQLW, and AFTI…PIWF. Residue Asn329 is glycosylated (N-linked (GlcNAc...) asparagine). 5 helical membrane-spanning segments follow: residues 337–357, 364–384, 393–413, 425–445, and 497–517; these read VMML…GFII, TPFM…LTTF, WIGY…QASL, PIGI…FLAV, and LMDV…AAAF. A disordered region spans residues 528–555; sequence AAGPGGPGGPGGPGGPGGPEGLRGGNKV. The span at 530–555 shows a compositional bias: gly residues; sequence GPGGPGGPGGPGGPGGPEGLRGGNKV.

This sequence belongs to the major facilitator superfamily. TCR/Tet family.

The protein localises to the endoplasmic reticulum membrane. Functionally, MFS-type transporter; part of the gene cluster that mediates the biosynthesis of viriditoxin, one of the 'classical' secondary metabolites produced by fungi and that has antibacterial activity. Is not essential for viriditoxin production. In Byssochlamys spectabilis (Paecilomyces variotii), this protein is MFS-type transporter VdtG.